A 188-amino-acid chain; its full sequence is Deoxyuridine 5'-triphosphate nucleotidohydrolase (188 aa).

A disordered region spans residues Met-1–Ile-34.

Belongs to the dUTPase family. It depends on Mg(2+) as a cofactor.

It catalyses the reaction dUTP + H2O = dUMP + diphosphate + H(+). Its function is as follows. This enzyme is involved in nucleotide metabolism: it produces dUMP, the immediate precursor of thymidine nucleotides and it decreases the intracellular concentration of dUTP so that uracil cannot be incorporated into DNA. The protein is Deoxyuridine 5'-triphosphate nucleotidohydrolase (49) of Ictaluridae (bullhead catfishes).